Consider the following 114-residue polypeptide: Kininogen-2 (114 aa).

The signal sequence occupies residues 1-23; it reads MRLWFCLSFFIVLCLEHFPGTLA. Positions 35-45 are enriched in basic residues; sequence TRLHGHHKPSR. A disordered region spans residues 35 to 114; it reads TRLHGHHKPS…QIPGLGPLRG (80 aa). The span at 65 to 80 shows a compositional bias: basic and acidic residues; it reads PESEEKTEQFLRDLPK. Arg-113 carries the post-translational modification Arginine amide.

It belongs to the bradykinin-related peptide family. In terms of tissue distribution, expressed by the skin glands.

Its subcellular location is the secreted. Potent vasodilator. Binds B1 (BDKRB1) and B2 (BDKRB2) bradykinin receptors. This is Kininogen-2 from Bombina maxima (Giant fire-bellied toad).